A 130-amino-acid chain; its full sequence is Small ribosomal subunit protein uS9 (130 aa).

It belongs to the universal ribosomal protein uS9 family.

The chain is Small ribosomal subunit protein uS9 from Aeromonas salmonicida (strain A449).